Reading from the N-terminus, the 614-residue chain is MKNSNERLNDAFYALKKATCSVRKSVPGVYKMFGTEDRLLYVGKAKDLKKRLSSYLSINRMSVNVYTMVKQIVRLEITVTENETEALLLEAKLIKSLKPKYNIIMRDDKFYPYILFSKHKYPRIVLHREKRSEGRYTGLYGPFLSSVMTRHIIATIKKAFLLRSCPDNFFATRARPCIEYEIKNCSAPCMQKITEEDYAKAVQMAHKALTGQSKEIQCELFEMMCRFSNNQDYESAIVCRDRLHALKSMKECMGFQTGIHGDVDFIAVYKRQDLYCMQVVFFRDGVNYGSQPYFIESVGNASDADIVNMFMLQIYNDFPSVVYVDLPSDYDTNIMSTAIKQLMKREVDIRLPATRDELKAMGLARNYAMEALNRRVRNTAQDTDLEEFATFFDLLKAPERIEIYDNSHISGTHPYGVMVVCGKDGLLKKEYRKFKINTVTNGDDCSMMHEVISRRFKEIPDVLPDFILIDGGRGQRSAVYGELSRLGIPFACIAKGPGRVAGTEVFYFSNGEKLSLDPASKLMHFLCRLRDEAHRFAITSHRKSRDGKLQFSTLLNDIPGIGKTKGKAILAYFGSIQAMKHARVEEISKVPGISLKLAKRVADYLKESQTTLRA.

The GIY-YIG domain occupies 25–103 (SVPGVYKMFG…IKSLKPKYNI (79 aa)). In terms of domain architecture, UVR spans 214–249 (KEIQCELFEMMCRFSNNQDYESAIVCRDRLHALKSM).

Belongs to the UvrC family. As to quaternary structure, interacts with UvrB in an incision complex.

Its subcellular location is the cytoplasm. Functionally, the UvrABC repair system catalyzes the recognition and processing of DNA lesions. UvrC both incises the 5' and 3' sides of the lesion. The N-terminal half is responsible for the 3' incision and the C-terminal half is responsible for the 5' incision. The sequence is that of UvrABC system protein C from Anaplasma phagocytophilum (strain HZ).